Here is a 393-residue protein sequence, read N- to C-terminus: Riboflavin biosynthesis protein RibBA (393 aa).

Residues 1-200 (MQLDSIDTAL…IEDLEKYRKS (200 aa)) are DHBP synthase. D-ribulose 5-phosphate contacts are provided by residues 27-28 (RE), Asp-32, 139-143 (RRGHT), and Glu-163. Glu-28 lines the Mg(2+) pocket. A Mg(2+)-binding site is contributed by His-142. The segment at 201–393 (SISKLDAKAK…TKKEKMGHLI (193 aa)) is GTP cyclohydrolase II. Residue 249–253 (RIHSA) coordinates GTP. Positions 254, 265, and 267 each coordinate Zn(2+). GTP contacts are provided by residues Gln-270, 291–293 (EGR), and Thr-313. Catalysis depends on Asp-325, which acts as the Proton acceptor; for GTP cyclohydrolase activity. Residue Arg-327 is the Nucleophile; for GTP cyclohydrolase activity of the active site. Residues Ser-348 and Lys-353 each coordinate GTP.

It in the N-terminal section; belongs to the DHBP synthase family. In the C-terminal section; belongs to the GTP cyclohydrolase II family. Mg(2+) is required as a cofactor. Requires Mn(2+) as cofactor. The cofactor is Zn(2+).

The enzyme catalyses D-ribulose 5-phosphate = (2S)-2-hydroxy-3-oxobutyl phosphate + formate + H(+). The catalysed reaction is GTP + 4 H2O = 2,5-diamino-6-hydroxy-4-(5-phosphoribosylamino)-pyrimidine + formate + 2 phosphate + 3 H(+). It participates in cofactor biosynthesis; riboflavin biosynthesis; 2-hydroxy-3-oxobutyl phosphate from D-ribulose 5-phosphate: step 1/1. The protein operates within cofactor biosynthesis; riboflavin biosynthesis; 5-amino-6-(D-ribitylamino)uracil from GTP: step 1/4. In terms of biological role, catalyzes the conversion of D-ribulose 5-phosphate to formate and 3,4-dihydroxy-2-butanone 4-phosphate. Its function is as follows. Catalyzes the conversion of GTP to 2,5-diamino-6-ribosylamino-4(3H)-pyrimidinone 5'-phosphate (DARP), formate and pyrophosphate. This chain is Riboflavin biosynthesis protein RibBA, found in Staphylococcus saprophyticus subsp. saprophyticus (strain ATCC 15305 / DSM 20229 / NCIMB 8711 / NCTC 7292 / S-41).